A 119-amino-acid polypeptide reads, in one-letter code: Large ribosomal subunit protein uL22 (119 aa).

It belongs to the universal ribosomal protein uL22 family. In terms of assembly, part of the 50S ribosomal subunit.

In terms of biological role, this protein binds specifically to 23S rRNA; its binding is stimulated by other ribosomal proteins, e.g. L4, L17, and L20. It is important during the early stages of 50S assembly. It makes multiple contacts with different domains of the 23S rRNA in the assembled 50S subunit and ribosome. Its function is as follows. The globular domain of the protein is located near the polypeptide exit tunnel on the outside of the subunit, while an extended beta-hairpin is found that lines the wall of the exit tunnel in the center of the 70S ribosome. This is Large ribosomal subunit protein uL22 from Chlorobium chlorochromatii (strain CaD3).